Consider the following 404-residue polypeptide: MKLPIYLDYSATTPVDPRVAEKMMQFMTMDGTFGNPASRSHRFGWQAEEAVDIARNQIADLVGADPREIVFTSGATESDNLAIKGAANFYQKKGKHIITSKTEHKAVLDTCRQLEREGFEVTYLAPQRNGIIDLKELEAAMRDDTILVSIMHVNNEIGVVQDIAAIGEMCRARGIIYHVDATQSVGKLPIDLSQLKVDLMSFSGHKIYGPKGIGALYVRRKPRVRIEAQMHGGGHERGMRSGTLPVHQIVGMGEAYRIAKEEMATEMERLRGLRNRLWNGIKDIEEVYLNGDLEHGAPNILNVSFNYVEGESLIMALKDLAVSSGSACTSASLEPSYVLRALGLNDELAHSSIRFSLGRFTTEEEIDYTIELVRKSIGRLRDLSPLWEMYKQGVDLNSIEWAHH.

Residues 75–76, asparagine 155, glutamine 183, and 203–205 each bind pyridoxal 5'-phosphate; these read AT and SGH. An N6-(pyridoxal phosphate)lysine modification is found at lysine 206. Threonine 243 contributes to the pyridoxal 5'-phosphate binding site. Catalysis depends on cysteine 328, which acts as the Cysteine persulfide intermediate. Position 328 (cysteine 328) interacts with [2Fe-2S] cluster.

The protein belongs to the class-V pyridoxal-phosphate-dependent aminotransferase family. NifS/IscS subfamily. As to quaternary structure, homodimer. Forms a heterotetramer with IscU, interacts with other sulfur acceptors. It depends on pyridoxal 5'-phosphate as a cofactor.

The protein localises to the cytoplasm. It carries out the reaction (sulfur carrier)-H + L-cysteine = (sulfur carrier)-SH + L-alanine. Its pathway is cofactor biosynthesis; iron-sulfur cluster biosynthesis. In terms of biological role, master enzyme that delivers sulfur to a number of partners involved in Fe-S cluster assembly, tRNA modification or cofactor biosynthesis. Catalyzes the removal of elemental sulfur and selenium atoms from cysteine and selenocysteine to produce alanine. Functions as a sulfur delivery protein for Fe-S cluster synthesis onto IscU, an Fe-S scaffold assembly protein, as well as other S acceptor proteins. Also functions as a selenium delivery protein in the pathway for the biosynthesis of selenophosphate. The protein is Cysteine desulfurase IscS of Escherichia coli (strain K12 / DH10B).